Reading from the N-terminus, the 407-residue chain is Arginine deiminase (407 aa).

The Amidino-cysteine intermediate role is filled by Cys-397.

It belongs to the arginine deiminase family.

The protein localises to the cytoplasm. It catalyses the reaction L-arginine + H2O = L-citrulline + NH4(+). It functions in the pathway amino-acid degradation; L-arginine degradation via ADI pathway; carbamoyl phosphate from L-arginine: step 1/2. This is Arginine deiminase from Escherichia coli O81 (strain ED1a).